The sequence spans 245 residues: Protein FAM133B (245 aa).

Disordered regions lie at residues 19–38 and 69–245; these read SRGP…NRPR and WKKE…SDSP. Residues 69–80 are compositionally biased toward basic and acidic residues; the sequence is WKKELEKHREKL. Ser82 is subject to Phosphoserine. Basic residues predominate over residues 89–102; the sequence is KKRQKKKKEKKKSG. Residues 103 to 119 show a composition bias toward low complexity; it reads RYSSSSSSSSDSSSSSS. The span at 128–140 shows a compositional bias: basic residues; it reads QTKRRKKKKSHCH. The segment covering 165-176 has biased composition (basic and acidic residues); it reads KDITEREKDTKG. Residues Ser190, Ser191, Ser193, and Ser195 each carry the phosphoserine modification. Residues 209–219 show a composition bias toward basic and acidic residues; sequence SGEERERTTDK. Residues 220–237 show a composition bias toward basic residues; it reads AKKRRKHKKHSKKKKKKA.

The protein belongs to the FAM133 family.

This chain is Protein FAM133B (Fam133b), found in Rattus norvegicus (Rat).